The sequence spans 350 residues: HTH-type DNA-binding transcriptional activator EutR (350 aa).

The HTH araC/xylS-type domain occupies 243-344 (SRAREYVLEN…AEKPSLTLHQ (102 aa)). 2 consecutive DNA-binding regions (H-T-H motif) follow at residues 260-281 (LDLC…HAIL) and 311-334 (VKDA…QQLF).

It participates in amine and polyamine degradation; ethanolamine degradation. Its function is as follows. Activates the transcription of the eut operon, allowing utilization of ethanolamine (EA). Positively regulates its own transcription. Probably binds EA and vitamin B12 as effectors. Competes with ethanolamine ammonia-lysase (EAL, the first enzyme in the EA degradation pathway) for adenosylcobalamin. Ethanolamine-associated signaling mediated via this protein, but not EA degradation, impacts S.typhimurium survival within macrophages. Binds the promoter of ssrB and eutS in vitro; in mouse infection models binding to ssrB probably induces all 4 operons of pathogenicity island SPI-2. Expression of the eut operon allows this bacteria to use ethanolamine (EA) as a carbon, nitrogen and energy source. It relies on cobalamin (vitamin B12) both as a cofactor for the ethanolamine ammonia-lyase (EAL) activity and to induce the operon. EA enhances bacterial survival in macrophages in a concentration-dependent manner, suggesting it is an important nutrient in infection. The polypeptide is HTH-type DNA-binding transcriptional activator EutR (Salmonella typhimurium (strain LT2 / SGSC1412 / ATCC 700720)).